The primary structure comprises 167 residues: Protein FAM163B (167 aa).

Residues 6–26 (VVITGGILATVILLCIIAVLC) traverse the membrane as a helical segment. Residue serine 40 is modified to Phosphoserine.

It belongs to the FAM163 family.

Its subcellular location is the membrane. This chain is Protein FAM163B (Fam163b), found in Mus musculus (Mouse).